Consider the following 185-residue polypeptide: Intraflagellar transport protein 22 homolog (185 aa).

GTP-binding positions include 10–17, 63–67, and 123–126; these read GPCESGKT, DCGGD, and HKPG.

It belongs to the small GTPase superfamily. Rab family. As to quaternary structure, component of the IFT complex B, at least composed of IFT20, IFT22, IFT25, IFT27, IFT46, IFT52, TRAF3IP1/IFT54, IFT57, IFT74, IFT80, IFT81, and IFT88. Interacts with IFT88. Interacts with CFAP61.

Its subcellular location is the cell projection. The protein resides in the cilium. In terms of biological role, small GTPase-like component of the intraflagellar transport (IFT) complex B. This chain is Intraflagellar transport protein 22 homolog (IFT22), found in Bos taurus (Bovine).